Reading from the N-terminus, the 992-residue chain is Aminopeptidase Q (992 aa).

The Cytoplasmic segment spans residues 2–13; sequence GPPSSSGFYVSR. Residues 14-34 form a helical; Signal-anchor for type II membrane protein membrane-spanning segment; that stretch reads AVALLLAALAAALLLALAVLA. The Extracellular portion of the chain corresponds to 35-992; sequence ALYGRCARVQ…RMTAWLRKNT (958 aa). Residues 48–92 form a disordered region; it reads LHHGGVPDAASSPRGTQEEQLPTWPPRPTREPAGTATPGHWRPPG. The N-linked (GlcNAc...) asparagine glycan is linked to asparagine 133. Residue glutamate 241 coordinates substrate. Residues asparagine 262, asparagine 289, asparagine 347, and asparagine 361 are each glycosylated (N-linked (GlcNAc...) asparagine). Position 380–384 (380–384) interacts with substrate; it reads SAMEN. Histidine 416 contacts Zn(2+). The Proton acceptor role is filled by glutamate 417. Zn(2+) contacts are provided by histidine 420 and glutamate 439. A glycan (N-linked (GlcNAc...) asparagine) is linked at asparagine 489. Residue tyrosine 505 is the Proton donor of the active site. N-linked (GlcNAc...) asparagine glycans are attached at residues asparagine 584, asparagine 602, asparagine 609, asparagine 655, asparagine 811, asparagine 850, and asparagine 889.

It belongs to the peptidase M1 family. It depends on Zn(2+) as a cofactor. As to expression, expressed in skin. Expression levels do not differ between dark and light skin areas.

It localises to the membrane. In terms of biological role, metalloprotease which may be important for placentation by regulating biological activity of key peptides at the embryo-maternal interface. Involved in coat pigmentation patterns. During skin development, may be required to establish the periodicity of tabby markings, initiating a pre-pattern at or before hair follicle development. This chain is Aminopeptidase Q (LVRN), found in Acinonyx jubatus (Cheetah).